Reading from the N-terminus, the 349-residue chain is tRNA pseudouridine synthase D (349 aa).

A substrate-binding site is contributed by F27. Residue D80 is the Nucleophile of the active site. N129 contacts substrate. Residues 155–303 (GVPNYFGAQR…VEAARRAMLL (149 aa)) enclose the TRUD domain. F329 lines the substrate pocket.

Belongs to the pseudouridine synthase TruD family.

The enzyme catalyses uridine(13) in tRNA = pseudouridine(13) in tRNA. Functionally, responsible for synthesis of pseudouridine from uracil-13 in transfer RNAs. The protein is tRNA pseudouridine synthase D of Escherichia coli O81 (strain ED1a).